The primary structure comprises 437 residues: Enolase (437 aa).

Glutamine 162 is a (2R)-2-phosphoglycerate binding site. Glutamate 204 serves as the catalytic Proton donor. Positions 251, 297, and 324 each coordinate Mg(2+). Residues lysine 349, arginine 378, serine 379, and lysine 400 each contribute to the (2R)-2-phosphoglycerate site. The active-site Proton acceptor is lysine 349.

The protein belongs to the enolase family. Mg(2+) is required as a cofactor.

Its subcellular location is the cytoplasm. The protein resides in the secreted. It localises to the cell surface. The enzyme catalyses (2R)-2-phosphoglycerate = phosphoenolpyruvate + H2O. It functions in the pathway carbohydrate degradation; glycolysis; pyruvate from D-glyceraldehyde 3-phosphate: step 4/5. In terms of biological role, catalyzes the reversible conversion of 2-phosphoglycerate (2-PG) into phosphoenolpyruvate (PEP). It is essential for the degradation of carbohydrates via glycolysis. The chain is Enolase from Pelodictyon phaeoclathratiforme (strain DSM 5477 / BU-1).